Here is a 147-residue protein sequence, read N- to C-terminus: Truncated RecQ DNA helicase-like protein C212.06c (147 aa).

Positions 1–72 (MGVRLVVHYR…CVRSFLASEM (72 aa)) constitute a Helicase C-terminal domain. A disordered region spans residues 100 to 147 (ETPKPAIATHSRYNASFSSSPPPQPGSSSGMSAMNTNTTSTTPVSGKT). Positions 125 to 141 (GSSSGMSAMNTNTTSTT) are enriched in low complexity.

It belongs to the helicase family. RecQ subfamily.

In terms of biological role, truncated ATP-dependent 3'-5' DNA helicase. The sequence is that of Truncated RecQ DNA helicase-like protein C212.06c from Schizosaccharomyces pombe (strain 972 / ATCC 24843) (Fission yeast).